The sequence spans 201 residues: MEGKAAVTTSTEHGDGEASRTAARTVVSGSSRGGAASRALSVADLILRVVAVVAIVDSAIAMGTTNQTLPFFTQFLRFKAQYSDLPTLTLFVVANSAVTAYLVLSIPLSVVHIIRSRASYSRLVLIFLDSVMLALVAAVASASAAIVYLAHKGNVRANWFAVCQQFDSFCERISGPLIGSFAAMAVLLLLVLLSAAALARR.

Residues Met1–Ala23 are disordered. Over Met1–Ser41 the chain is Cytoplasmic. The chain crosses the membrane as a helical span at residues Val42–Met62. Over Gly63–Thr87 the chain is Extracellular. Asn66 is a glycosylation site (N-linked (GlcNAc...) asparagine). The chain crosses the membrane as a helical span at residues Leu88 to Leu108. The Cytoplasmic segment spans residues Ser109 to Arg122. A helical transmembrane segment spans residues Leu123–Ser143. Residues Ala144–Arg172 lie on the Extracellular side of the membrane. A helical membrane pass occupies residues Ile173–Leu193. The Cytoplasmic portion of the chain corresponds to Ser194–Arg201.

This sequence belongs to the Casparian strip membrane proteins (CASP) family. As to quaternary structure, homodimer and heterodimers.

Its subcellular location is the cell membrane. Functionally, regulates membrane-cell wall junctions and localized cell wall deposition. Required for establishment of the Casparian strip membrane domain (CSD) and the subsequent formation of Casparian strips, a cell wall modification of the root endodermis that determines an apoplastic barrier between the intraorganismal apoplasm and the extraorganismal apoplasm and prevents lateral diffusion. The polypeptide is Casparian strip membrane protein 4 (Oryza sativa subsp. japonica (Rice)).